A 204-amino-acid polypeptide reads, in one-letter code: Large ribosomal subunit protein eL15 (204 aa).

This sequence belongs to the eukaryotic ribosomal protein eL15 family.

The chain is Large ribosomal subunit protein eL15 (RpL15) from Anopheles gambiae (African malaria mosquito).